Consider the following 200-residue polypeptide: Putative HMP/thiamine-binding protein YkoF (200 aa).

Thiamine contacts are provided by Leu17 and Thr49.

Homodimer in vitro. In vivo, may be a part of an ABC transporter complex which is composed of two ATP-binding proteins (YkoD), two transmembrane proteins (YkoC and YkoE) and a solute-binding protein (YkoF).

Part of the ABC transporter complex YkoCDEF that could transport hydroxymethylpyrimidine (HMP) and/or thiamine. Could also transport other HMP-containing products. Binds thiamine via its HMP moiety. This is Putative HMP/thiamine-binding protein YkoF (ykoF) from Bacillus subtilis (strain 168).